Here is a 235-residue protein sequence, read N- to C-terminus: Cytidylate kinase (235 aa).

Position 16–24 (16–24 (GPAASGKST)) interacts with ATP.

It belongs to the cytidylate kinase family. Type 1 subfamily.

It localises to the cytoplasm. The enzyme catalyses CMP + ATP = CDP + ADP. It carries out the reaction dCMP + ATP = dCDP + ADP. This Chlorobaculum tepidum (strain ATCC 49652 / DSM 12025 / NBRC 103806 / TLS) (Chlorobium tepidum) protein is Cytidylate kinase.